The primary structure comprises 156 residues: Ribosomal RNA large subunit methyltransferase H (156 aa).

S-adenosyl-L-methionine is bound by residues Leu73, Gly104, and Leu123–Leu128.

Belongs to the RNA methyltransferase RlmH family. As to quaternary structure, homodimer.

Its subcellular location is the cytoplasm. The catalysed reaction is pseudouridine(1915) in 23S rRNA + S-adenosyl-L-methionine = N(3)-methylpseudouridine(1915) in 23S rRNA + S-adenosyl-L-homocysteine + H(+). Specifically methylates the pseudouridine at position 1915 (m3Psi1915) in 23S rRNA. The protein is Ribosomal RNA large subunit methyltransferase H of Vibrio parahaemolyticus serotype O3:K6 (strain RIMD 2210633).